The chain runs to 254 residues: Phosphoribosylaminoimidazole-succinocarboxamide synthase (254 aa).

Belongs to the SAICAR synthetase family.

The enzyme catalyses 5-amino-1-(5-phospho-D-ribosyl)imidazole-4-carboxylate + L-aspartate + ATP = (2S)-2-[5-amino-1-(5-phospho-beta-D-ribosyl)imidazole-4-carboxamido]succinate + ADP + phosphate + 2 H(+). It participates in purine metabolism; IMP biosynthesis via de novo pathway; 5-amino-1-(5-phospho-D-ribosyl)imidazole-4-carboxamide from 5-amino-1-(5-phospho-D-ribosyl)imidazole-4-carboxylate: step 1/2. The chain is Phosphoribosylaminoimidazole-succinocarboxamide synthase from Brucella abortus (strain S19).